Reading from the N-terminus, the 448-residue chain is Adenylosuccinate synthetase (448 aa).

GTP contacts are provided by residues 22–28 (GDEGKGK) and 50–52 (GHT). Catalysis depends on D23, which acts as the Proton acceptor. D23 and G50 together coordinate Mg(2+). Residues 23 to 26 (DEGK), 48 to 51 (NAGH), T139, R153, Q234, T249, and R321 each bind IMP. H51 acts as the Proton donor in catalysis. 317 to 323 (SVTGRPR) lines the substrate pocket. GTP-binding positions include R323, 349 to 351 (KLD), and 431 to 433 (STG).

This sequence belongs to the adenylosuccinate synthetase family. In terms of assembly, homodimer. Requires Mg(2+) as cofactor.

The protein resides in the cytoplasm. It catalyses the reaction IMP + L-aspartate + GTP = N(6)-(1,2-dicarboxyethyl)-AMP + GDP + phosphate + 2 H(+). Its pathway is purine metabolism; AMP biosynthesis via de novo pathway; AMP from IMP: step 1/2. Functionally, plays an important role in the de novo pathway of purine nucleotide biosynthesis. Catalyzes the first committed step in the biosynthesis of AMP from IMP. This chain is Adenylosuccinate synthetase, found in Burkholderia thailandensis (strain ATCC 700388 / DSM 13276 / CCUG 48851 / CIP 106301 / E264).